The following is a 73-amino-acid chain: U-scoloptoxin(03)-Ssd1b (73 aa).

An N-terminal signal peptide occupies residues 1–23 (MKSSMAVLLVMGLIIFTLDKCYS).

Contains 3 disulfide bonds. In terms of tissue distribution, expressed by the venom gland.

The protein localises to the secreted. The chain is U-scoloptoxin(03)-Ssd1b from Scolopendra dehaani (Thai centipede).